Here is a 156-residue protein sequence, read N- to C-terminus: Ribosome maturation factor RimP (156 aa).

Belongs to the RimP family.

It is found in the cytoplasm. Functionally, required for maturation of 30S ribosomal subunits. The protein is Ribosome maturation factor RimP of Oceanobacillus iheyensis (strain DSM 14371 / CIP 107618 / JCM 11309 / KCTC 3954 / HTE831).